Here is a 438-residue protein sequence, read N- to C-terminus: MPKIVVVGAVAGGATCASQIRRLDKESDIIIFEKDRDMSFANCALPYVIGEVVEDRRYALAYTPEKFYDRKQITVKTYHEVIAINDERQTVSVLNRKTNEQFEESYDKLILSPGASANSLGFESDITFTLRNLEDTDAIDQFIKANQVDKVLVVGAGYVSLEVLENLYERGLHPTLIHRSDKINKLMDADMNQPILDELDKREIPYRLNEEINAINGNEITFKSGKVEHYDMIIEGVGTHPNSKFIESSNIKLDRKGFIPVNDKFETNVPNIYAIGDIATSHYRHVDLPASVPLAWGAHRAASIVAEQIAGNDTIEFKGFLGNNIVKFFDYTFASVGVKPNELKQFDYKMVEVTQGAHANYYPGNSPLHLRVYYDTSNRQILRAAAVGKEGADKRIDVLSMAMMNQLTVDELTEFEVAYAPPYSHPKDLINMIGYKAK.

8–33 (GAVAGGATCASQIRRLDKESDIIIFE) lines the FAD pocket. Substrate is bound by residues Thr-15, Gln-19, Arg-22, Ser-39, and Asn-42. The active-site Nucleophile is Cys-43. Catalysis depends on Cys-43, which acts as the Redox-active. A substrate-binding site is contributed by Lys-71. 151–166 (VLVVGAGYVSLEVLEN) lines the NADP(+) pocket. 267-277 (TNVPNIYAIGD) provides a ligand contact to FAD. His-299 contacts substrate. Tyr-419 is an FAD binding site. Lys-427 contacts substrate.

Belongs to the class-III pyridine nucleotide-disulfide oxidoreductase family. In terms of assembly, homodimer. Requires FAD as cofactor.

It carries out the reaction NADP(+) + 2 CoA = CoA-disulfide + NADPH + H(+). Functionally, catalyzes specifically the NADPH-dependent reduction of coenzyme A disulfide. The protein is Coenzyme A disulfide reductase of Staphylococcus aureus (strain USA300).